The sequence spans 252 residues: Triosephosphate isomerase (252 aa).

10–12 contacts substrate; sequence NWK. Catalysis depends on H96, which acts as the Electrophile. E168 functions as the Proton acceptor in the catalytic mechanism. Substrate contacts are provided by residues G174, S214, and 235–236; that span reads GG.

Belongs to the triosephosphate isomerase family. As to quaternary structure, homodimer.

It localises to the cytoplasm. It carries out the reaction D-glyceraldehyde 3-phosphate = dihydroxyacetone phosphate. The protein operates within carbohydrate biosynthesis; gluconeogenesis. It functions in the pathway carbohydrate degradation; glycolysis; D-glyceraldehyde 3-phosphate from glycerone phosphate: step 1/1. Its function is as follows. Involved in the gluconeogenesis. Catalyzes stereospecifically the conversion of dihydroxyacetone phosphate (DHAP) to D-glyceraldehyde-3-phosphate (G3P). In Streptococcus pyogenes serotype M5 (strain Manfredo), this protein is Triosephosphate isomerase.